We begin with the raw amino-acid sequence, 1873 residues long: Voltage-dependent L-type calcium channel subunit alpha-1S (1873 aa).

The segment at 1–23 (MEPSSPQDEGLRKKQPKKPLPEV) is disordered. Over 1–51 (MEPSSPQDEGLRKKQPKKPLPEVLPRPPRALFCLTLQNPLRKACISIVEWK) the chain is Cytoplasmic. One copy of the I repeat lies at 38-337 (NPLRKACISI…LVLGVLSGEF (300 aa)). The helical transmembrane segment at 52 to 70 (PFETIILLTIFANCVALAV) threads the bilayer. Residues 71–85 (YLPMPEDDNNSLNLG) lie on the Extracellular side of the membrane. N-linked (GlcNAc...) asparagine glycosylation occurs at N79. A helical transmembrane segment spans residues 86 to 106 (LEKLEYFFLTVFSIEAAMKII). Residues 107 to 115 (AYGFLFHQD) are Cytoplasmic-facing. Residues 116 to 136 (AYLRSGWNVLDFIIVFLGVFT) traverse the membrane as a helical segment. The Extracellular segment spans residues 137 to 160 (AILEQVNVIQSNTAPMSSKGAGLD). The chain crosses the membrane as a helical span at residues 161–179 (VKALRAFRVLRPLRLVSGV). The Cytoplasmic segment spans residues 180 to 196 (PSLQVVLNSIFKAMLPL). Residues 197-218 (FHIALLVLFMVIIYAIIGLELF) form a helical membrane-spanning segment. Over 219–279 (KGKMHKTCYY…HGITHFDNFG (61 aa)) the chain is Extracellular. 2 disulfides stabilise this stretch: C226-C254 and C245-C261. Residue N257 is glycosylated (N-linked (GlcNAc...) asparagine). The pore-forming intramembrane region spans 280-301 (FSMLTVYQCITMEGWTDVLYWV). The Selectivity filter of repeat I signature appears at 290 to 293 (TMEG). Position 292 (E292) interacts with Ca(2+). The Extracellular segment spans residues 302 to 309 (NDAIGNEW). A helical transmembrane segment spans residues 310 to 330 (PWIYFVTLILLGSFFILNLVL). Over 331–432 (GVLSGEFTKE…WKCHDLVKSR (102 aa)) the chain is Cytoplasmic. The interval 357 to 374 (QQLEEDLRGYMSWITQGE) is binding to the beta subunit. Phosphoserine occurs at positions 393 and 397. One copy of the II repeat lies at 418–664 (NRVFRWKCHD…VFLAIAVDNL (247 aa)). Residues 433–451 (VFYWLVILIVALNTLSIAS) traverse the membrane as a helical segment. Residues 452–462 (EHHNQPLWLTH) lie on the Extracellular side of the membrane. A helical transmembrane segment spans residues 463–483 (LQDIANRVLLSLFTIEMLLKM). Residues 484 to 494 (YGLGLRQYFMS) are Cytoplasmic-facing. Residues 495–514 (IFNRFDCFVVCSGILELLLV) traverse the membrane as a helical segment. The Extracellular portion of the chain corresponds to 515–523 (ESGAMTPLG). The chain crosses the membrane as a helical span at residues 524 to 542 (ISVLRCIRLLRLFKITKYW). Residues 543–561 (TSLSNLVASLLNSIRSIAS) are Cytoplasmic-facing. Residues 562–581 (LLLLLFLFIIIFALLGMQLF) traverse the membrane as a helical segment. The Extracellular segment spans residues 582–601 (GGRYDFEDTEVRRSNFDNFP). The segment at residues 602–623 (QALISVFQVLTGEDWNSVMYNG) is an intramembrane region (pore-forming). Positions 612–615 (TGED) match the Selectivity filter of repeat II motif. E614 contacts Ca(2+). Over 624-633 (IMAYGGPSYP) the chain is Extracellular. Residues 634–653 (GVLVCIYFIILFVCGNYILL) form a helical membrane-spanning segment. The Cytoplasmic portion of the chain corresponds to 654 to 799 (NVFLAIAVDN…VLCHRIVNAT (146 aa)). 2 disordered regions span residues 673–717 (AQKA…IPTT) and 731–757 (EVKDPYPSADFPGDDEEDEPEIPVSPR). Phosphoserine; by PKA is present on S687. A compositionally biased stretch (basic and acidic residues) spans 690–711 (LPDKTEEEKSVMAKKLEQKPKG). A compositionally biased stretch (acidic residues) spans 742–751 (PGDDEEDEPE). Residues 747–760 (EDEPEIPVSPRPRP) are interaction with STAC, STAC2 and STAC3 (via SH3 domains). Residues 786-1068 (NKVRVLCHRI…IFVGFVIVTF (283 aa)) form an III repeat. The helical transmembrane segment at 800-818 (WFTNFILLFILLSSAALAA) threads the bilayer. Topologically, residues 819–830 (EDPIRAESVRNQ) are extracellular. A helical transmembrane segment spans residues 831–850 (ILGYFDIAFTSVFTVEIVLK). Residues 851–866 (MTTYGAFLHKGSFCRN) are Cytoplasmic-facing. Residues 867 to 885 (YFNILDLLVVAVSLISMGL) traverse the membrane as a helical segment. The Extracellular portion of the chain corresponds to 886–892 (ESSTISV). A helical membrane pass occupies residues 893–911 (VKILRVLRVLRPLRAINRA). At 912–930 (KGLKHVVQCVFVAIRTIGN) the chain is on the cytoplasmic side. Residues 931 to 950 (IVLVTTLLQFMFACIGVQLF) traverse the membrane as a helical segment. Over 951 to 1000 (KGKFFSCNDLSKMTEEECRGYYYVYKDGDPTQMELRPRQWIHNDFHFDNV) the chain is Extracellular. C957 and C968 are joined by a disulfide. The interval 988–1077 (RQWIHNDFHF…FQEQGETEYK (90 aa)) is dihydropyridine binding. Positions 1001 to 1021 (LSAMMSLFTVSTFEGWPQLLY) form an intramembrane region, pore-forming. Positions 1012 to 1015 (TFEG) match the Selectivity filter of repeat III motif. A Ca(2+)-binding site is contributed by E1014. Topologically, residues 1022-1038 (RAIDSNEEDMGPVYNNR) are extracellular. Residues 1039-1060 (VEMAIFFIIYIILIAFFMMNIF) traverse the membrane as a helical segment. The Cytoplasmic portion of the chain corresponds to 1061 to 1118 (VGFVIVTFQEQGETEYKNCELDKNQRQCVQYALKARPLRCYIPKNPYQYQVWYVVTSS). Residues 1105–1384 (NPYQYQVWYV…LFVAVIMDNF (280 aa)) form an IV repeat. The chain crosses the membrane as a helical span at residues 1119 to 1140 (YFEYLMFALIMLNTICLGMQHY). Topologically, residues 1141-1148 (HQSEEMNH) are extracellular. Residues 1149–1170 (ISDILNVAFTIIFTLEMILKLL) form a helical membrane-spanning segment. At 1171-1180 (AFKARGYFGD) the chain is on the cytoplasmic side. A helical transmembrane segment spans residues 1181 to 1200 (PWNVFDFLIVIGSIIDVILS). The Extracellular portion of the chain corresponds to 1201 to 1231 (EIDTFLASSGGLYCLGGGCGNVDPDESARIS). The helical transmembrane segment at 1232–1250 (SAFFRLFRVMRLIKLLSRA) threads the bilayer. The Cytoplasmic segment spans residues 1251 to 1268 (EGVRTLLWTFIKSFQALP). The chain crosses the membrane as a helical span at residues 1269–1289 (YVALLIVMLFFIYAVIGMQMF). At 1290–1311 (GKIALVDGTQINRNNNFQTFPQ) the chain is on the extracellular side. An intramembrane region (pore-forming) is located at residues 1312–1330 (AVLLLFRCATGEAWQEILL). The Selectivity filter of repeat IV signature appears at 1321–1324 (TGEA). The Extracellular portion of the chain corresponds to 1331-1356 (ACSYGKLCDPESDYAPGEEYTCGTNF). Positions 1337–1403 (LCDPESDYAP…LGPHHLDEFK (67 aa)) are dihydropyridine binding. C1338 and C1352 are disulfide-bonded. Residues 1349–1391 (EYTCGTNFAYYYFISFYMLCAFLIINLFVAVIMDNFDYLTRDW) form a phenylalkylamine binding region. A helical membrane pass occupies residues 1357–1381 (AYYYFISFYMLCAFLIINLFVAVIM). The Cytoplasmic portion of the chain corresponds to 1382 to 1873 (DNFDYLTRDW…SQETLIPPRP (492 aa)). The interval 1522–1542 (KFYATFLIQEHFRKFMKRQEE) is interaction with calmodulin. At S1575 the chain carries Phosphoserine; by PKA and CAMK2. A Phosphothreonine; by CK2 modification is found at T1579. Phosphoserine; by PKA is present on S1617. Disordered regions lie at residues 1689–1782 (EFPG…RPAP) and 1841–1873 (GMASVPGSLSRRSSLGSLDQVQGSQETLIPPRP). Low complexity predominate over residues 1847–1858 (GSLSRRSSLGSL).

The protein belongs to the calcium channel alpha-1 subunit (TC 1.A.1.11) family. CACNA1S subfamily. In terms of assembly, component of a calcium channel complex consisting of a pore-forming alpha subunit (CACNA1S) and the ancillary subunits CACNB1 or CACNB2, CACNG1 and CACNA2D1. The channel complex contains alpha, beta, gamma and delta subunits in a 1:1:1:1 ratio, i.e. it contains either CACNB1 or CACNB2. CACNA1S channel activity is modulated by the auxiliary subunits (CACNB1 or CACNB2, CACNG1 and CACNA2D1). Interacts with DYSF and JSRP1. Interacts with RYR1. Interacts with STAC, STAC2 and STAC3 (via their SH3 domains). Interaction with STAC3 promotes expression at the cell membrane. Interaction with STAC2 promotes expression at the cell membrane, but with much lower efficiency than STAC3. Interaction with STAC1 leads to very low levels expression at the cell membrane, much less than the levels observed upon interaction with STAC3 and STAC2. Interacts with CALM. In terms of processing, the alpha-1S subunit is found in two isoforms in the skeletal muscle: a minor form of 212 kDa containing the complete amino acid sequence, and a major form of 190 kDa derived from the full-length form by post-translational proteolysis close to Phe-1690. Phosphorylated. Phosphorylation by PKA activates the calcium channel. Both the minor and major forms are phosphorylated in vitro by PKA. Phosphorylation at Ser-1575 is involved in beta-adrenergic-mediated regulation of the channel. Detected in skeletal muscle T-tubules (at protein level).

The protein localises to the cell membrane. The protein resides in the sarcolemma. It is found in the T-tubule. It catalyses the reaction Ca(2+)(in) = Ca(2+)(out). Channel activity is blocked by dihydropyridines (DHP), phenylalkylamines, and by benzothiazepines. Pore-forming, alpha-1S subunit of the voltage-gated calcium channel that gives rise to L-type calcium currents in skeletal muscle. Calcium channels containing the alpha-1S subunit play an important role in excitation-contraction coupling in skeletal muscle via their interaction with RYR1, which triggers Ca(2+) release from the sarcplasmic reticulum and ultimately results in muscle contraction. Long-lasting (L-type) calcium channels belong to the 'high-voltage activated' (HVA) group. This chain is Voltage-dependent L-type calcium channel subunit alpha-1S (CACNA1S), found in Oryctolagus cuniculus (Rabbit).